Reading from the N-terminus, the 142-residue chain is Aspartate 1-decarboxylase (142 aa).

Ser25 acts as the Schiff-base intermediate with substrate; via pyruvic acid in catalysis. Ser25 is modified (pyruvic acid (Ser)). A substrate-binding site is contributed by Thr57. Catalysis depends on Tyr58, which acts as the Proton donor. 73 to 75 (GAA) is a binding site for substrate.

It belongs to the PanD family. Heterooctamer of four alpha and four beta subunits. It depends on pyruvate as a cofactor. Is synthesized initially as an inactive proenzyme, which is activated by self-cleavage at a specific serine bond to produce a beta-subunit with a hydroxyl group at its C-terminus and an alpha-subunit with a pyruvoyl group at its N-terminus.

The protein localises to the cytoplasm. It catalyses the reaction L-aspartate + H(+) = beta-alanine + CO2. It participates in cofactor biosynthesis; (R)-pantothenate biosynthesis; beta-alanine from L-aspartate: step 1/1. Its function is as follows. Catalyzes the pyruvoyl-dependent decarboxylation of aspartate to produce beta-alanine. The polypeptide is Aspartate 1-decarboxylase (Mycobacterium leprae (strain Br4923)).